We begin with the raw amino-acid sequence, 250 residues long: NH(3)-dependent NAD(+) synthetase (250 aa).

An ATP-binding site is contributed by 31–38; sequence GISGGIDS. Asp37 contributes to the Mg(2+) binding site. Arg122 is a binding site for deamido-NAD(+). An ATP-binding site is contributed by Thr142. Position 147 (Glu147) interacts with Mg(2+). The deamido-NAD(+) site is built by Lys155 and Asp162. Lys171 and Ser193 together coordinate ATP. 239–240 provides a ligand contact to deamido-NAD(+); that stretch reads HK.

The protein belongs to the NAD synthetase family. In terms of assembly, homodimer.

The enzyme catalyses deamido-NAD(+) + NH4(+) + ATP = AMP + diphosphate + NAD(+) + H(+). It functions in the pathway cofactor biosynthesis; NAD(+) biosynthesis; NAD(+) from deamido-NAD(+) (ammonia route): step 1/1. Its function is as follows. Catalyzes the ATP-dependent amidation of deamido-NAD to form NAD. Uses ammonia as a nitrogen source. The polypeptide is NH(3)-dependent NAD(+) synthetase (Alkaliphilus oremlandii (strain OhILAs) (Clostridium oremlandii (strain OhILAs))).